Reading from the N-terminus, the 396-residue chain is Multidrug resistance protein MdtL (396 aa).

Topologically, residues 1–4 (MFRY) are cytoplasmic. The chain crosses the membrane as a helical span at residues 5–25 (LLCCFGLVLMYPTGIDMYLVG). Residues 26 to 41 (LPQIANQLGATEAQLH) are Periplasmic-facing. The helical transmembrane segment at 42–62 (IAFSVYLAGMATTMLFAGSLA) threads the bilayer. The Cytoplasmic segment spans residues 63–64 (DR). Residues 65-85 (IGRKPITLFSALLFALASYFA) traverse the membrane as a helical segment. The Periplasmic segment spans residues 86 to 92 (ARSQSSD). The chain crosses the membrane as a helical span at residues 93 to 113 (LFLVARFVQGVGAGCCYVVAF). At 114–131 (AILRDALDDKRRAKVLSM) the chain is on the cytoplasmic side. A helical transmembrane segment spans residues 132 to 152 (VNGVTCIIPVIAPVIGHLIML). Over 153–157 (RFPWP) the chain is Periplasmic. Residues 158 to 178 (SLFYTMAVMGLLVFGLCLFVL) form a helical membrane-spanning segment. Residues 179–209 (RETYSKASFHSQTLPRVQTESFKQGFFISRV) are Cytoplasmic-facing. The helical transmembrane segment at 210 to 230 (VITTLGVTTILSYVNVSPMLI) threads the bilayer. Topologically, residues 231–242 (MGQMGFDRGQYS) are periplasmic. The helical transmembrane segment at 243–263 (NTMAMTALVSMLASFSTPFLL) threads the bilayer. Residues 264–277 (NQFKEKSLILFSQT) are Cytoplasmic-facing. Transmembrane regions (helical) follow at residues 278–298 (LFAA…GQLF) and 299–319 (NLLG…VTMS). Residues 320 to 333 (QALSPFVARAGVAS) lie on the Cytoplasmic side of the membrane. The helical transmembrane segment at 334–354 (SLLGIAQVCTSALYIWVMGLL) threads the bilayer. At 355–360 (EVSAIN) the chain is on the periplasmic side. A helical transmembrane segment spans residues 361-381 (ILLAILAVGALISITLMLAVP). The Cytoplasmic segment spans residues 382–396 (KLSEMVANEQIPESA).

This sequence belongs to the major facilitator superfamily. DHA1 family. MdtL (TC 2.A.1.2.22) subfamily.

The protein resides in the cell inner membrane. The sequence is that of Multidrug resistance protein MdtL from Shewanella sp. (strain ANA-3).